The following is a 429-amino-acid chain: Glucose-1-phosphate adenylyltransferase (429 aa).

Alpha-D-glucose 1-phosphate contacts are provided by residues Tyr-116, Gly-181, 196–197, and Ser-214; that span reads EK.

The protein belongs to the bacterial/plant glucose-1-phosphate adenylyltransferase family. As to quaternary structure, homotetramer.

The enzyme catalyses alpha-D-glucose 1-phosphate + ATP + H(+) = ADP-alpha-D-glucose + diphosphate. It functions in the pathway glycan biosynthesis; glycogen biosynthesis. In terms of biological role, involved in the biosynthesis of ADP-glucose, a building block required for the elongation reactions to produce glycogen. Catalyzes the reaction between ATP and alpha-D-glucose 1-phosphate (G1P) to produce pyrophosphate and ADP-Glc. This Paramagnetospirillum magneticum (strain ATCC 700264 / AMB-1) (Magnetospirillum magneticum) protein is Glucose-1-phosphate adenylyltransferase.